A 328-amino-acid polypeptide reads, in one-letter code: GMP reductase (328 aa).

The Thioimidate intermediate role is filled by Cys-176. 205-228 (IIADGGIRTHGDIAKSIRFGASMI) serves as a coordination point for NADP(+).

This sequence belongs to the IMPDH/GMPR family. GuaC type 2 subfamily.

It carries out the reaction IMP + NH4(+) + NADP(+) = GMP + NADPH + 2 H(+). In terms of biological role, catalyzes the irreversible NADPH-dependent deamination of GMP to IMP. It functions in the conversion of nucleobase, nucleoside and nucleotide derivatives of G to A nucleotides, and in maintaining the intracellular balance of A and G nucleotides. In Streptococcus pneumoniae (strain ATCC 700669 / Spain 23F-1), this protein is GMP reductase.